Reading from the N-terminus, the 187-residue chain is Interferon beta (187 aa).

A signal peptide spans 1–21 (MTNKCLLQIALLLCFSTTALS). The residue at position 24 (Tyr24) is a Phosphotyrosine. A disulfide bridge connects residues Cys52 and Cys162. N-linked (GlcNAc...) asparagine glycosylation is present at Asn101.

It belongs to the alpha/beta interferon family. Monomer.

Its subcellular location is the secreted. Its function is as follows. Type I interferon cytokine that plays a key role in the innate immune response to infection, developing tumors and other inflammatory stimuli. Signals via binding to high-affinity (IFNAR2) and low-affinity (IFNAR1) heterodimeric receptor, activating the canonical Jak-STAT signaling pathway resulting in transcriptional activation or repression of interferon-regulated genes that encode the effectors of the interferon response, such as antiviral proteins, regulators of cell proliferation and differentiation, and immunoregulatory proteins. Signals mostly via binding to a IFNAR1-IFNAR2 heterodimeric receptor, but can also function with IFNAR1 alone and independently of Jak-STAT pathways. Elicits a wide variety of responses, including antiviral and antibacterial activities, and can regulate the development of B-cells, myelopoiesis and lipopolysaccharide (LPS)-inducible production of tumor necrosis factor. Plays a role in neuronal homeostasis by regulating dopamine turnover and protecting dopaminergic neurons: acts by promoting neuronal autophagy and alpha-synuclein clearance, thereby preventing dopaminergic neuron loss. IFNB1 is more potent than interferon-alpha (IFN-alpha) in inducing the apoptotic and antiproliferative pathways required for control of tumor cell growth. The protein is Interferon beta (IFNB1) of Macaca fascicularis (Crab-eating macaque).